The primary structure comprises 624 residues: Mannosyl-oligosaccharide 1,2-alpha-mannosidase MNS3 (624 aa).

Topologically, residues 1-43 are cytoplasmic; it reads MSKSLPYSVKDIHYDNAKFRHRSPLKVFSQSLLTLSTKRNYAS. Residues 44 to 64 traverse the membrane as a helical; Signal-anchor for type II membrane protein segment; sequence CSTGKFLILILFFGVACLMLM. Residues 65 to 624 lie on the Lumenal side of the membrane; sequence SKSPNESGLN…AHPLPIRRNT (560 aa). N-linked (GlcNAc...) asparagine glycans are attached at residues asparagine 69 and asparagine 114. Residues 91-123 form a disordered region; that stretch reads LRKPPRLPPRLSPDEGQLRGSSTNGSTISNSDP. A compositionally biased stretch (low complexity) spans 110–121; sequence GSSTNGSTISNS. Catalysis depends on glutamate 212, which acts as the Proton donor. N-linked (GlcNAc...) asparagine glycosylation is present at asparagine 236. Aspartate 357 is an active-site residue. Asparagine 377 carries an N-linked (GlcNAc...) asparagine glycan. Cysteines 428 and 471 form a disulfide. The active-site Proton donor is the glutamate 485. Asparagine 503 is a glycosylation site (N-linked (GlcNAc...) asparagine). Residue glutamate 526 is part of the active site. Threonine 613 is a binding site for Ca(2+).

It belongs to the glycosyl hydrolase 47 family. Ca(2+) serves as cofactor. Mn(2+) is required as a cofactor. The cofactor is Mg(2+). As to expression, expressed in flowers, siliques, stems, leaves, roots, stamens and sepals.

The protein localises to the golgi apparatus. The protein resides in the cis-Golgi network membrane. It catalyses the reaction N(4)-(alpha-D-Man-(1-&gt;2)-alpha-D-Man-(1-&gt;2)-alpha-D-Man-(1-&gt;3)-[alpha-D-Man-(1-&gt;2)-alpha-D-Man-(1-&gt;3)-[alpha-D-Man-(1-&gt;2)-alpha-D-Man-(1-&gt;6)]-alpha-D-Man-(1-&gt;6)]-beta-D-Man-(1-&gt;4)-beta-D-GlcNAc-(1-&gt;4)-beta-D-GlcNAc)-L-asparaginyl-[protein] (N-glucan mannose isomer 9A1,2,3B1,2,3) + 4 H2O = N(4)-(alpha-D-Man-(1-&gt;3)-[alpha-D-Man-(1-&gt;3)-[alpha-D-Man-(1-&gt;6)]-alpha-D-Man-(1-&gt;6)]-beta-D-Man-(1-&gt;4)-beta-D-GlcNAc-(1-&gt;4)-beta-D-GlcNAc)-L-asparaginyl-[protein] (N-glucan mannose isomer 5A1,2) + 4 beta-D-mannose. It carries out the reaction N(4)-(alpha-D-Man-(1-&gt;2)-alpha-D-Man-(1-&gt;2)-alpha-D-Man-(1-&gt;3)-[alpha-D-Man-(1-&gt;3)-[alpha-D-Man-(1-&gt;2)-alpha-D-Man-(1-&gt;6)]-alpha-D-Man-(1-&gt;6)]-beta-D-Man-(1-&gt;4)-beta-D-GlcNAc-(1-&gt;4)-beta-D-GlcNAc)-L-asparaginyl-[protein] (N-glucan mannose isomer 8A1,2,3B1,3) + 3 H2O = N(4)-(alpha-D-Man-(1-&gt;3)-[alpha-D-Man-(1-&gt;3)-[alpha-D-Man-(1-&gt;6)]-alpha-D-Man-(1-&gt;6)]-beta-D-Man-(1-&gt;4)-beta-D-GlcNAc-(1-&gt;4)-beta-D-GlcNAc)-L-asparaginyl-[protein] (N-glucan mannose isomer 5A1,2) + 3 beta-D-mannose. The catalysed reaction is N(4)-(alpha-D-Man-(1-&gt;2)-alpha-D-Man-(1-&gt;2)-alpha-D-Man-(1-&gt;3)-[alpha-D-Man-(1-&gt;2)-alpha-D-Man-(1-&gt;3)-[alpha-D-Man-(1-&gt;2)-alpha-D-Man-(1-&gt;6)]-alpha-D-Man-(1-&gt;6)]-beta-D-Man-(1-&gt;4)-beta-D-GlcNAc-(1-&gt;4)-beta-D-GlcNAc)-L-asparaginyl-[protein] (N-glucan mannose isomer 9A1,2,3B1,2,3) + H2O = N(4)-(alpha-D-Man-(1-&gt;2)-alpha-D-Man-(1-&gt;2)-alpha-D-Man-(1-&gt;3)-[alpha-D-Man-(1-&gt;3)-[alpha-D-Man-(1-&gt;2)-alpha-D-Man-(1-&gt;6)]-alpha-D-Man-(1-&gt;6)]-beta-D-Man-(1-&gt;4)-beta-D-GlcNAc-(1-&gt;4)-beta-D-GlcNAc)-L-asparaginyl-[protein] (N-glucan mannose isomer 8A1,2,3B1,3) + beta-D-mannose. It functions in the pathway protein modification; protein glycosylation. Its activity is regulated as follows. Inhibited by kifunensine and 1-deoxymannojirimycin, but not by swainsonine. Its function is as follows. Class I alpha-mannosidase essential for early N-glycan processing. Removes preferentially alpha-1,2-linked mannose residues from Man(9)GlcNAc(2) to produce Man(8)GlcNAc(2). Involved in root development and cell wall biosynthesis. The sequence is that of Mannosyl-oligosaccharide 1,2-alpha-mannosidase MNS3 (MNS3) from Arabidopsis thaliana (Mouse-ear cress).